A 361-amino-acid chain; its full sequence is MNSSILAKLEQLSIRLEEVSIMLSDPEVVSNVKKFTKLSIEYAQLTPVNQQFQTYLSHLKNLEDAQLILFEDDMEIKTMAKEEILNTKKILSQLDLKLKKSILPKDPNDSRNIIIEIRAGTGGDEASIFSGDLFKIYSRYSEKQKWTIEIISSSIGEHGGFKEIIARISGINVYSKLKFESGAHRVQRVPTTESQGRIHTSACTVAIMPEVENIEEINININDVRIDTFRASGAGGQHVNKTDSAVRITHLPTGTVVECQDGRSQHKNKAQAMSVLASRILDAQQQEQQEQQSSTRKELIGSGDRSQRIRTYNYPQGRITDHRINLTLYKLTEIMEGNLSAIIKPLIIEQQTNQLTELNNT.

Glutamine 237 bears the N5-methylglutamine mark. The segment at 283–307 is disordered; it reads AQQQEQQEQQSSTRKELIGSGDRSQ.

Belongs to the prokaryotic/mitochondrial release factor family. Post-translationally, methylated by PrmC. Methylation increases the termination efficiency of RF1.

It is found in the cytoplasm. Functionally, peptide chain release factor 1 directs the termination of translation in response to the peptide chain termination codons UAG and UAA. The sequence is that of Peptide chain release factor 1 from Vesicomyosocius okutanii subsp. Calyptogena okutanii (strain HA).